Reading from the N-terminus, the 1097-residue chain is MDTCVETFFNPYLRRKPRRDWRRCEDNNKNFLQVVPRGVLYDGATGLIKVQSGMEPRMFYAEKEYVLNPDKPWPTLRTRGWCRGPYSDDVRFHTYDQVVNLVLADSDEQISPRWNSHVVPAGNVIRMFGATDEGVSVCVNVFGQKAYFYCERMQSEDLKNTVYDIADKVPEPCSPFSVSISPVTKSSFYGYGLGHIPNLYRLSFNNWNMCRKIGKRMLEEGRKVYELGVDPLARFLIDRKIPSFGWCLARRYSVRAAGYVSRAQLEIDCDVADILPIEEQSNWPFYRCLSFDIECMSGTGAFPAAENVDDIIIQISCVCFGVGEMVHHAYDVHADLSTPAVPENHLFTIGPCAPIPDVKIYTFPSEYEMLRGFFIFLSWYSPEFITGYNINGFDIKYILTRAEKLYKMDVGQFTKLRRGGRMFVFSPEKGKAGFGTSNTVKVFWSGTVVLDMYPVCTAKASSPNYKLDTMAEIYLKKKKDDLSYKEIPVQFSAGDEGRAPGGKYCLQDAVLVRELFEMLAFHFEAAAIARLARIPLRKVIFDGQQIRIYTCLLEECSGRDMILPNMPSLGHGAAAAIEEAAAGGEGDETSEGENSNNSRTVGYQGATVLEPECGFHHVPVCVFDFASLYPSIIMSNNLCYSTLLVEGSPEVPEKDVLRVEIGDQCHRFVRENVHRSLLAELLVRWLTQRKLVREAMKQCTNEMQRMIMDKQQLALKVTCNAFYGFTGVAAGMLPCLPIAASITKIGRDMLLATAGHIEDRCNRPDFLRTVLGLPPEAIDPEALRVKIIYGDTDSVFAAFYGIDKEALLKAVGALAANVTNALFKEPVRLEFEKMFVSLMMICKKRYIGKVHGSQNLSMKGVDLVRRTACGFVKAVVSDVLHMVFNDETVSEGTMKLSRMTFDDLKKNGIPCEFGPVVSRLCRARDDLHLKKVPVPELTLSSVLSQELSCYKQKNLPHLAVIRRLAARKEELPAVGDRVEYVLTLPDGCKKNVPNYEIAEDPRHVVEAKLSINAEKYYEQVVKAVTNTLMPVFPRDMPKREKFFSLVVPQRIYIPDQFLHLCGNVNELARGGDDSDGGDSEKENMDTERSSSHEAMET.

The tract at residues 1069–1097 (RGGDDSDGGDSEKENMDTERSSSHEAMET) is disordered. Residues 1078-1097 (DSEKENMDTERSSSHEAMET) are compositionally biased toward basic and acidic residues.

Belongs to the DNA polymerase type-B family.

It localises to the host nucleus. The catalysed reaction is DNA(n) + a 2'-deoxyribonucleoside 5'-triphosphate = DNA(n+1) + diphosphate. The sequence is that of DNA polymerase catalytic subunit (UL54) from Murid herpesvirus 1 (strain Smith) (MuHV-1).